The primary structure comprises 208 residues: Uridine kinase (208 aa).

An ATP-binding site is contributed by 11 to 18 (GGTGSGKS).

Belongs to the uridine kinase family.

It is found in the cytoplasm. The enzyme catalyses uridine + ATP = UMP + ADP + H(+). The catalysed reaction is cytidine + ATP = CMP + ADP + H(+). It participates in pyrimidine metabolism; CTP biosynthesis via salvage pathway; CTP from cytidine: step 1/3. Its pathway is pyrimidine metabolism; UMP biosynthesis via salvage pathway; UMP from uridine: step 1/1. This is Uridine kinase from Clostridium perfringens (strain ATCC 13124 / DSM 756 / JCM 1290 / NCIMB 6125 / NCTC 8237 / Type A).